The chain runs to 116 residues: Large ribosomal subunit protein bL17 (116 aa).

This sequence belongs to the bacterial ribosomal protein bL17 family. In terms of assembly, part of the 50S ribosomal subunit. Contacts protein L32.

The protein is Large ribosomal subunit protein bL17 of Dictyoglomus turgidum (strain DSM 6724 / Z-1310).